Here is a 143-residue protein sequence, read N- to C-terminus: Transcriptional regulator MraZ (143 aa).

2 SpoVT-AbrB domains span residues 5–47 (EYTH…PLIE) and 76–119 (ACEC…DAER).

It belongs to the MraZ family. In terms of assembly, forms oligomers.

It is found in the cytoplasm. The protein resides in the nucleoid. The protein is Transcriptional regulator MraZ of Limosilactobacillus fermentum (strain NBRC 3956 / LMG 18251) (Lactobacillus fermentum).